The sequence spans 137 residues: ATP synthase epsilon chain (137 aa).

It belongs to the ATPase epsilon chain family. As to quaternary structure, F-type ATPases have 2 components, CF(1) - the catalytic core - and CF(0) - the membrane proton channel. CF(1) has five subunits: alpha(3), beta(3), gamma(1), delta(1), epsilon(1). CF(0) has three main subunits: a, b and c.

The protein localises to the cell membrane. Produces ATP from ADP in the presence of a proton gradient across the membrane. This Thermobifida fusca (strain YX) protein is ATP synthase epsilon chain.